The following is a 391-amino-acid chain: Aspartate aminotransferase (391 aa).

Gly-40 and Asn-176 together coordinate L-aspartate. N6-(pyridoxal phosphate)lysine is present on Lys-236. Arg-366 contributes to the L-aspartate binding site.

Belongs to the class-I pyridoxal-phosphate-dependent aminotransferase family. Homodimer. Pyridoxal 5'-phosphate is required as a cofactor.

The protein resides in the cytoplasm. It catalyses the reaction L-aspartate + 2-oxoglutarate = oxaloacetate + L-glutamate. The sequence is that of Aspartate aminotransferase (aspC) from Pyrococcus horikoshii (strain ATCC 700860 / DSM 12428 / JCM 9974 / NBRC 100139 / OT-3).